Reading from the N-terminus, the 858-residue chain is Bifunctional uridylyltransferase/uridylyl-removing enzyme (858 aa).

The tract at residues 1-324 is uridylyltransferase; that stretch reads MSASVAAPPP…PATSGVTRVL (324 aa). The segment at 325–681 is uridylyl-removing; the sequence is SPGRFVEKQG…ARPSPVGDAL (357 aa). The 123-residue stretch at 443–565 folds into the HD domain; sequence VDQHILMVLR…VGNERRLTAL (123 aa). ACT domains follow at residues 682–761 and 790–858; these read QVLV…PEPS and ILSV…AIAV.

Belongs to the GlnD family. Requires Mg(2+) as cofactor.

It catalyses the reaction [protein-PII]-L-tyrosine + UTP = [protein-PII]-uridylyl-L-tyrosine + diphosphate. The catalysed reaction is [protein-PII]-uridylyl-L-tyrosine + H2O = [protein-PII]-L-tyrosine + UMP + H(+). Its activity is regulated as follows. Uridylyltransferase (UTase) activity is inhibited by glutamine, while glutamine activates uridylyl-removing (UR) activity. Modifies, by uridylylation and deuridylylation, the PII regulatory proteins (GlnB and homologs), in response to the nitrogen status of the cell that GlnD senses through the glutamine level. Under low glutamine levels, catalyzes the conversion of the PII proteins and UTP to PII-UMP and PPi, while under higher glutamine levels, GlnD hydrolyzes PII-UMP to PII and UMP (deuridylylation). Thus, controls uridylylation state and activity of the PII proteins, and plays an important role in the regulation of nitrogen assimilation and metabolism. In Burkholderia thailandensis (strain ATCC 700388 / DSM 13276 / CCUG 48851 / CIP 106301 / E264), this protein is Bifunctional uridylyltransferase/uridylyl-removing enzyme.